Reading from the N-terminus, the 728-residue chain is Protein Hook homolog 1 (728 aa).

M1 carries the N-acetylmethionine modification. Residues 1-555 are sufficient for interaction with microtubules; that stretch reads MEDPQPLPQS…LKQKLEAHME (555 aa). Positions 12 to 128 constitute a Calponin-homology (CH) domain; it reads LPLCDSLIIW…RLLQLILGCA (117 aa). Coiled-coil stretches lie at residues 168-443 and 477-658; these read PASD…LNQA and LRLQ…AKLR. S235 carries the post-translational modification Phosphoserine. The segment at 481–510 is disordered; the sequence is QEGTENERIEQLQEQLEQKHRKMNELETEQ. Residues 657-728 are sufficient for interaction with AKTIP and VPS18; sequence LRDYEEKLIV…SVKVPAAASD (72 aa). Phosphoserine is present on residues S719 and S727.

This sequence belongs to the hook family. Self-associates. Component of the FTS/Hook/FHIP complex (FHF complex), composed of AKTIP/FTS, FHIP1B, and one or more members of the Hook family of proteins HOOK1, HOOK2, and HOOK3. Interacts directly with AKTIP/FTS, HOOK2 and HOOK3. Associates with several subunits of the homotypic vesicular sorting complex (the HOPS complex) including VPS16, VPS18, VPS39 and VPS41; these interactions may be indirect. Interacts with CCDC181. Interacts (via coiled-coil region) with RIMBP3 (via C-terminus). Interacts with LRGUK (via guanylate kinase-like domain). Interacts with microtubules. May interacts with CLN3. Interacts with AP4M1; the interaction is direct, mediates the interaction between FTS-Hook-FHIP (FHF) complex and AP-4 and the perinuclear distribution of AP-4. As to expression, mainly expressed in testis.

The protein resides in the cytoplasm. It localises to the cytoskeleton. Functionally, component of the FTS/Hook/FHIP complex (FHF complex). The FHF complex may function to promote vesicle trafficking and/or fusion via the homotypic vesicular protein sorting complex (the HOPS complex). FHF complex promotes the distribution of AP-4 complex to the perinuclear area of the cell. Required for spermatid differentiation. Probably involved in the positioning of the microtubules of the manchette and the flagellum in relation to the membrane skeleton. This chain is Protein Hook homolog 1 (Hook1), found in Mus musculus (Mouse).